A 1406-amino-acid polypeptide reads, in one-letter code: Ubiquitin carboxyl-terminal hydrolase 6 (1406 aa).

In terms of domain architecture, Rab-GAP TBC spans 100–292 (GIPMNIRGPV…RLWDVYLVEG (193 aa)). A disordered region spans residues 348-380 (KLTRKQGDLPPPAKREQGSLAPRPVPASRGGKT). Positions 532 to 1369 (TGLSNLGNTC…SAYILFYEQQ (838 aa)) constitute a USP domain. C541 (nucleophile) is an active-site residue. A disordered region spans residues 1120 to 1231 (HKPLTPQGDE…KKNLDASKEN (112 aa)). The span at 1129-1155 (ELSKPRILAREVKKVDAQSSAGKEDML) shows a compositional bias: basic and acidic residues. Positions 1156–1197 (LSKSPSSLSANISSSPKGSPSSSRKSGTSCPSSKNSSPNSSP) are enriched in low complexity. Catalysis depends on H1328, which acts as the Proton acceptor. A disordered region spans residues 1384–1406 (KMADTSSTDEDSESDYEKYSMLQ).

It belongs to the peptidase C19 family. In terms of assembly, interacts with RAC1 and CDC42. Interacts (via Rab-GAP TBC domain) with ARF6. Interacts with calmodulin (CALM1, CALM2 and/or CALM3); the interaction is calcium-dependent. Post-translationally, monubiquitinated; ubiquitination is calmodulin and calcium dependent. As to expression, testis specific. Expressed in various cancer cell lines.

The protein localises to the cell membrane. The protein resides in the cytoplasm. Its subcellular location is the endosome. The enzyme catalyses Thiol-dependent hydrolysis of ester, thioester, amide, peptide and isopeptide bonds formed by the C-terminal Gly of ubiquitin (a 76-residue protein attached to proteins as an intracellular targeting signal).. Deubiquitinase with an ATP-independent isopeptidase activity, cleaving at the C-terminus of the ubiquitin moiety. Catalyzes its own deubiquitination. In vitro, isoform 2, but not isoform 3, shows deubiquitinating activity. Promotes plasma membrane localization of ARF6 and selectively regulates ARF6-dependent endocytic protein trafficking. Is able to initiate tumorigenesis by inducing the production of matrix metalloproteinases following NF-kappa-B activation. May act as a GTPase-activating protein for RAB3A. The sequence is that of Ubiquitin carboxyl-terminal hydrolase 6 (USP6) from Homo sapiens (Human).